The primary structure comprises 357 residues: Aurora kinase A- and ninein-interacting protein (357 aa).

The segment covering 71-91 has biased composition (polar residues); that stretch reads LQPGKTNGSDQKSVSSHTESQ. A disordered region spans residues 71–98; the sequence is LQPGKTNGSDQKSVSSHTESQINKESKK. The segment at 187–357 is interaction with AURKA; the sequence is RKEEKGDSAR…EGNQVIRHQF (171 aa). A phosphoserine mark is found at S267 and S292. The interaction with RBBP8/CtIP stretch occupies residues 281 to 357; the sequence is KDSWSQLFTE…EGNQVIRHQF (77 aa).

Belongs to the AUNIP family. Interacts (via C-terminus) with AURKA (via C-terminus). Interacts (via N-terminus) with NIN; this interaction blocks NIN phosphorylation by both AURKA and GSK3B. Identified in a complex with NIN and AURKA. Interacts with RBBP8/CtIP. Expressed in heart, skeletal muscles, placenta and testis.

It localises to the nucleus. The protein resides in the chromosome. The protein localises to the cytoplasm. It is found in the cytoskeleton. Its subcellular location is the microtubule organizing center. It localises to the centrosome. The protein resides in the spindle pole. Functionally, DNA-binding protein that accumulates at DNA double-strand breaks (DSBs) following DNA damage and promotes DNA resection and homologous recombination. Serves as a sensor of DNA damage: binds DNA with a strong preference for DNA substrates that mimic structures generated at stalled replication forks, and anchors RBBP8/CtIP to DSB sites to promote DNA end resection and ensuing homologous recombination repair. Inhibits non-homologous end joining (NHEJ). Required for the dynamic movement of AURKA at the centrosomes and spindle apparatus during the cell cycle. The polypeptide is Aurora kinase A- and ninein-interacting protein (Homo sapiens (Human)).